We begin with the raw amino-acid sequence, 751 residues long: FAD-dependent monooxygenase atnA (751 aa).

Residues 8 to 28 (LIVGGGVAGLSLAIMLEAYGF) traverse the membrane as a helical segment. 3 residues coordinate FAD: Glu34, Gly48, and Arg109. The active site involves Tyr218. Positions 311 and 324 each coordinate FAD. Helical transmembrane passes span 446–466 (PLAT…PWSV), 481–501 (SEVF…LWVI), 508–528 (LLIS…YWGW), 563–583 (ALLP…ALAS), 590–610 (DWWP…STFL), 639–659 (IAVV…AALL), 663–683 (IISL…ALIV), and 706–726 (AWAV…LAGA).

It belongs to the paxM FAD-dependent monooxygenase family. FAD serves as cofactor.

It localises to the membrane. It functions in the pathway secondary metabolite biosynthesis; terpenoid biosynthesis. Functionally, FAD-dependent monooxygenase; part of the gene cluster that mediates the biosynthesis of the meroterpenoids arthripenoids. The pathway begins with the HR-PKS atnH that catalyzes two chain-extension steps to form a reduced triketide, which then primes the SAT domain in the NR-PKS atnG to initiate three more cycles of extension to give a linear hexaketide corresponding to the polyketide part of arthripenoids. The FAD-dependent monooxygenase atnJ then performs an oxidative decarboxylation at C11 of the atnH/atnG product, via an electrophilic aromatic hydroxylation with concomitant ipso-decarboxylation. The membrane-bound polyprenyl transferase atnF then introduces a farnesyl group before the FAD-dependent monooxygenase atnK functions as the first epoxidase on terminal C12'-C13' olefin, followed by a second epoxidation on C7'-C8' catalyzed by atnA. The terpene cyclase/mutase atnI then initiates the sequential tricyclic ring formation through protonation of the terminal epoxide and catalyzes the regioselective and stereoselective 6/6/6-tricyclic ring formation. The cytochrome P450 monooxygenase atnM is responsible for hydroxylating both C1' and C10'. The next steps may involve ketoreduction and acetyl transfer by the ketoreductase atnB and the acetyltransferase atnC, and lead to the production of arthripenoid B, the final biosynthetic product of the atn cluster. The hydroquinone moiety in arthripenoid B is prone to undergo spontaneous oxidation to afford a benzoquinone compound, a key intermediate for generating structure diversity. For instance, addition of a cysteine followed by ring contraction gives arthripenoid A, tautomerization gives the main product arthripenoid C, addition of a molecular of water or amine affords arthripenoid D or E, respectively, and loss of one water forms arthripenoid F. This chain is FAD-dependent monooxygenase atnA, found in Arthrinium sp.